Here is a 105-residue protein sequence, read N- to C-terminus: Integration host factor subunit alpha (105 aa).

It belongs to the bacterial histone-like protein family. In terms of assembly, heterodimer of an alpha and a beta chain.

In terms of biological role, this protein is one of the two subunits of integration host factor, a specific DNA-binding protein that functions in genetic recombination as well as in transcriptional and translational control. The sequence is that of Integration host factor subunit alpha from Xanthobacter autotrophicus (strain ATCC BAA-1158 / Py2).